Consider the following 396-residue polypeptide: Ribosomal RNA large subunit methyltransferase I (396 aa).

Residues Ser2–Arg81 enclose the PUA domain.

Belongs to the methyltransferase superfamily. RlmI family.

The protein localises to the cytoplasm. It catalyses the reaction cytidine(1962) in 23S rRNA + S-adenosyl-L-methionine = 5-methylcytidine(1962) in 23S rRNA + S-adenosyl-L-homocysteine + H(+). Its function is as follows. Specifically methylates the cytosine at position 1962 (m5C1962) of 23S rRNA. This Escherichia coli O157:H7 protein is Ribosomal RNA large subunit methyltransferase I.